Reading from the N-terminus, the 424-residue chain is Steryl acetyl hydrolase 1 (424 aa).

Alanine 2 is modified (N-acetylalanine). At 2–45 (AANSGLDSKVEYYRLQENEIISAVSSEDADQNDAGFRLSTIHLH) the chain is on the cytoplasmic side. The chain crosses the membrane as a helical; Signal-anchor for type II membrane protein span at residues 46–66 (LFHGLKFAALLFTVVPVFIIL). Topologically, residues 67–424 (DSMKIIFQRK…IARILEFMQS (358 aa)) are lumenal. N-linked (GlcNAc...) asparagine glycosylation is present at asparagine 85. The Involved in the stabilization of the negatively charged intermediate by the formation of the oxyanion hole signature appears at 176–178 (HGG). Serine 250 is an active-site residue. Asparagine 283 is a glycosylation site (N-linked (GlcNAc...) asparagine). The active site involves histidine 395. An N-linked (GlcNAc...) asparagine glycan is attached at asparagine 401.

This sequence belongs to the 'GDXG' lipolytic enzyme family.

It is found in the endoplasmic reticulum membrane. Functionally, required for the deacetylation of acetylated sterols. Involved in the resistance to eugenol and pregnenolone toxicity. This chain is Steryl acetyl hydrolase 1 (SAY1), found in Saccharomyces cerevisiae (strain ATCC 204508 / S288c) (Baker's yeast).